The following is a 540-amino-acid chain: H(+)/hexose cotransporter 2 (540 aa).

Over 1 to 29 (MAGGGPVASTTTNRASQYGYARGGLNWYI) the chain is Cytoplasmic. A helical membrane pass occupies residues 30–50 (FIVALTAGSGGLLFGYDIGVT). Residues 51 to 90 (GGVTSMPEFLQKFFPSIYDRTQQPSDSKDPYCTYDDQKLQ) lie on the Extracellular side of the membrane. The chain crosses the membrane as a helical span at residues 91–111 (LFTSSFFLAGMFVSFFAGSVV). Topologically, residues 112–124 (RRWGRKPTMLIAS) are cytoplasmic. A helical transmembrane segment spans residues 125–135 (VLFLAGAGLNA). Topologically, residues 136–147 (GAQDLAMLVIGR) are extracellular. Residues 148 to 168 (VLLGFGVGGGNNAVPLYLSEC) traverse the membrane as a helical segment. Residues 169–176 (APPKYRGG) are Cytoplasmic-facing. A helical membrane pass occupies residues 177 to 197 (LNMMFQLAVTIGIIVAQLVNY). Over 198 to 207 (GTQTMNNGWR) the chain is Extracellular. A helical membrane pass occupies residues 208-228 (LSLGLAGVPAIILLIGSLLLP). The Cytoplasmic portion of the chain corresponds to 229–296 (ETPNSLIERG…YSPMLIVTSL (68 aa)). A helical membrane pass occupies residues 297-317 (IAMLQQLTGINAIMFYVPVLF). Topologically, residues 318-326 (SSFGTARHA) are extracellular. The helical transmembrane segment at 327–337 (ALLNTVIIGAV) threads the bilayer. Residues 338 to 355 (NVAATFVSIFSVDKFGRR) are Cytoplasmic-facing. The chain crosses the membrane as a helical span at residues 356–376 (GLFLEGGIQMFIGQVVTAAVL). Residues 377–396 (GVELNKYGTNLPSSTAAGVL) are Extracellular-facing. The helical transmembrane segment at 397–417 (VVICVYVAAFAWSWGPLGWLV) threads the bilayer. The Cytoplasmic portion of the chain corresponds to 418–435 (PSEIQTLETRGAGMSMAV). A helical membrane pass occupies residues 436 to 456 (IVNFLFSFVIGQAFLSMMCAM). Residues 457 to 458 (RW) lie on the Extracellular side of the membrane. A helical transmembrane segment spans residues 459–479 (GVFLFFAGWVVIMTFFVYFCL). Topologically, residues 480–540 (PETKGVPVET…SEDGKPASDQ (61 aa)) are cytoplasmic.

Belongs to the major facilitator superfamily. Sugar transporter (TC 2.A.1.1) family.

The protein localises to the membrane. Functionally, active uptake of galactose. In Parachlorella kessleri (Green alga), this protein is H(+)/hexose cotransporter 2 (HUP2).